Consider the following 162-residue polypeptide: Auxin-responsive protein SAUR36 (162 aa).

This sequence belongs to the ARG7 family. In terms of tissue distribution, expressed in embryo, endosperm, growing hypocotyls and shoot apical meristems.

Functionally, acts a positive regulator of leaf senescence and may mediate auxin-induced leaf senescence. Plays a role in the regulation of seed germination by gibberellins and abscisic acid (ABA). Plays a role in the regulation of light-dependent hypocotyl elongation. This is Auxin-responsive protein SAUR36 from Arabidopsis thaliana (Mouse-ear cress).